Consider the following 173-residue polypeptide: Large ribosomal subunit protein uL15 (173 aa).

Residues 1–11 (MKLNEIRDNQG) show a composition bias toward basic and acidic residues. The interval 1–50 (MKLNEIRDNQGARKSRVRVGRGIGSGLGKTGGRGQKGQKSRSGVSINGFE) is disordered. The segment covering 21 to 35 (RGIGSGLGKTGGRGQ) has biased composition (gly residues).

Belongs to the universal ribosomal protein uL15 family. Part of the 50S ribosomal subunit.

Binds to the 23S rRNA. The protein is Large ribosomal subunit protein uL15 of Rhizorhabdus wittichii (strain DSM 6014 / CCUG 31198 / JCM 15750 / NBRC 105917 / EY 4224 / RW1) (Sphingomonas wittichii).